A 474-amino-acid chain; its full sequence is MAGKTLYDKLWDMHLVKQRDDGSALIYIDRHILHEVTSPQAFEGLRLAGRKPWRIDANIATPDHNVPTTRTERKGGLAAIADEVSRLQVQTLDENCDDFGITEFKMNDVRQGIVHVVGPEQGATLPGMTVVCGDSHTSTHGAFGALAHGIGTSEVEHVLATQCLVAKKMKNMLVKVEGKLPAGVTAKDIVLAVIGRIGTAGGNGHAIEFAGSAIRDLSIEGRMTICNMSIEAGARVGLVAVDQKTIDYVKGRPFAPSAEQWEQAVACWQGLVSDADARFDTVVELDAAQIKPQVSWGTSPEMVLAVDQNVPDPARESDPIKRGSIERALKYMGLQPNQAITDIQLDRVFIGSCTNSRIEDLRAAAEVARGRKVAATIKQALVVPGSGLVKEQAEKEGLDRIFIEAGFEWREPGCSMCLAMNPDRLESGEHCASTSNRNFEGRQGAGGRTHLVSPAMAAAAAVNGRFIDVRELLA.

[4Fe-4S] cluster contacts are provided by cysteine 353, cysteine 414, and cysteine 417.

It belongs to the aconitase/IPM isomerase family. LeuC type 1 subfamily. In terms of assembly, heterodimer of LeuC and LeuD. [4Fe-4S] cluster serves as cofactor.

The enzyme catalyses (2R,3S)-3-isopropylmalate = (2S)-2-isopropylmalate. It participates in amino-acid biosynthesis; L-leucine biosynthesis; L-leucine from 3-methyl-2-oxobutanoate: step 2/4. Its function is as follows. Catalyzes the isomerization between 2-isopropylmalate and 3-isopropylmalate, via the formation of 2-isopropylmaleate. The chain is 3-isopropylmalate dehydratase large subunit from Pseudomonas paraeruginosa (strain DSM 24068 / PA7) (Pseudomonas aeruginosa (strain PA7)).